Reading from the N-terminus, the 190-residue chain is uncharacterized protein (190 aa).

2 disordered regions span residues 1 to 21 (MALR…ATVG) and 155 to 190 (PEMG…TQAS). Residues 181-190 (SPSSHPTQAS) show a composition bias toward low complexity.

This is an uncharacterized protein from Homo sapiens (Human).